The following is a 279-amino-acid chain: Phosphonoacetaldehyde hydrolase (279 aa).

Catalysis depends on Asp-20, which acts as the Nucleophile. Asp-20 and Ala-22 together coordinate Mg(2+). Lys-62 functions as the Schiff-base intermediate with substrate in the catalytic mechanism. Asp-196 is a binding site for Mg(2+).

Belongs to the HAD-like hydrolase superfamily. PhnX family. As to quaternary structure, homodimer. The cofactor is Mg(2+).

It catalyses the reaction phosphonoacetaldehyde + H2O = acetaldehyde + phosphate + H(+). Functionally, involved in phosphonate degradation. The chain is Phosphonoacetaldehyde hydrolase from Aeromonas hydrophila subsp. hydrophila (strain ATCC 7966 / DSM 30187 / BCRC 13018 / CCUG 14551 / JCM 1027 / KCTC 2358 / NCIMB 9240 / NCTC 8049).